The chain runs to 253 residues: Indole-3-glycerol phosphate synthase (253 aa).

The protein belongs to the TrpC family.

The enzyme catalyses 1-(2-carboxyphenylamino)-1-deoxy-D-ribulose 5-phosphate + H(+) = (1S,2R)-1-C-(indol-3-yl)glycerol 3-phosphate + CO2 + H2O. It participates in amino-acid biosynthesis; L-tryptophan biosynthesis; L-tryptophan from chorismate: step 4/5. The protein is Indole-3-glycerol phosphate synthase of Bacillus anthracis (strain A0248).